We begin with the raw amino-acid sequence, 180 residues long: D(1A) dopamine receptor (180 aa).

Residues 1-10 (NTLLVCAAVI) form a helical membrane-spanning segment. The Cytoplasmic portion of the chain corresponds to 11-21 (RFRHLRSKVTN). Residues 22–48 (FFVISLAVSDLLVAVLVMPWKAVAEIA) form a helical membrane-spanning segment. Topologically, residues 49–57 (GFWPFGSFC) are extracellular. Residues Cys-57 and Cys-147 are joined by a disulfide bond. The helical transmembrane segment at 58 to 80 (NIWVAFDIMCSTASILNLCVISV) threads the bilayer. Residues 81-99 (DRYWAISSPFRYERKMTPK) lie on the Cytoplasmic side of the membrane. A helical transmembrane segment spans residues 100-124 (AAFILIGVAWTLSVLISFIPVQLSW). Residues 125–153 (HKAKPTSPPDGNATSLDETVDNCDSSLSR) are Extracellular-facing. N-linked (GlcNAc...) asparagine glycosylation occurs at Asn-136. Residues 154-179 (TYSISSSLVNFYNPVAIMXVTYTRIH) form a helical membrane-spanning segment. Residue Arg-180 is a topological domain, cytoplasmic.

Belongs to the G-protein coupled receptor 1 family. In terms of assembly, interacts with DNAJC14 via its C-terminus. Interacts with DRD2. Interacts with DORIP1.

Its subcellular location is the cell membrane. It localises to the endoplasmic reticulum membrane. The protein resides in the cell projection. The protein localises to the cilium membrane. In terms of biological role, dopamine receptor whose activity is mediated by G proteins which activate adenylyl cyclase. This chain is D(1A) dopamine receptor (DRD1), found in Oryctolagus cuniculus (Rabbit).